We begin with the raw amino-acid sequence, 123 residues long: MIGLLLVLHGSKIKEWQEIVINYAEELKRHFPLVEYGFIEINEPKIDEAAKKLVERGADTIVVVPLLFAAGMHFKRDIPNQLKETSNKAKIIIAEPIGFDKRIVDILKEKAEKALSVEGTSYQ.

The Proton acceptor role is filled by His9. His9 is a Co(2+) binding site. Residues Glu43 and 68 to 73 (FAAGMH) contribute to the substrate site. His73 serves as a coordination point for Co(2+).

This sequence belongs to the CbiX family. CbiXS subfamily. In terms of assembly, homotetramer; dimer of dimers.

The enzyme catalyses Co-sirohydrochlorin + 2 H(+) = sirohydrochlorin + Co(2+). It functions in the pathway cofactor biosynthesis; adenosylcobalamin biosynthesis; cob(II)yrinate a,c-diamide from sirohydrochlorin (anaerobic route): step 1/10. In terms of biological role, catalyzes the insertion of Co(2+) into sirohydrochlorin as part of the anaerobic pathway to cobalamin biosynthesis. The polypeptide is Sirohydrochlorin cobaltochelatase (Sulfolobus acidocaldarius (strain ATCC 33909 / DSM 639 / JCM 8929 / NBRC 15157 / NCIMB 11770)).